The following is a 399-amino-acid chain: uncharacterized protein (399 aa).

11 consecutive transmembrane segments (helical) span residues 19 to 39, 46 to 66, 91 to 111, 123 to 143, 146 to 166, 183 to 203, 225 to 247, 283 to 303, 307 to 327, 335 to 355, and 369 to 389; these read IFSINLLYMGILSGISYPLFV, VNLLFAIVIGAVFEIPLLLMY, FYTIFGISLWLTYVLSQPILG, QFEQFLIVESLFPLVLLIIAS, IYAKIVDILAIFQIIIAIFIA, LLSALLFDLSAFIFINAISYI, VAILSILDSYSNLNILFALMPIW, VLLLIFSTETIANVLENLLGF, FGLDGLLFIFWNFIIVAFAYL, LFSIVLTSLAIQIFLFFYLGY, and IEYTILRIMILPIIGAIVYLL.

It localises to the host membrane. Functionally, putative amino acid transporter. This is an uncharacterized protein from Saccharolobus islandicus (Sulfolobus islandicus).